The following is a 345-amino-acid chain: UPF0324 membrane protein RB0971 (345 aa).

Transmembrane regions (helical) follow at residues 13–32 (SLSV…AAVA), 42–61 (YGAP…HFLA), 93–115 (LLIG…TILF), 130–152 (ALLT…AAVL), 161–183 (NLIF…YPIV), 193–215 (ATGI…GFSV), 228–247 (LIRV…VLRS), 262–284 (VPGF…VPVL), 291–310 (AISR…KTSL), and 320–342 (AVAL…MYYL).

Belongs to the UPF0324 family.

The protein localises to the cell membrane. The sequence is that of UPF0324 membrane protein RB0971 from Rhizobium meliloti (strain 1021) (Ensifer meliloti).